Here is a 166-residue protein sequence, read N- to C-terminus: Protein TIFY 11e (166 aa).

A Tify domain is found at 65–100 (ASSAAAQMTIFYGGRVLVLDECPADRAAALLRLAAS). A Jas motif is present at residues 123–148 (PVARKASLQRFMEKRKGRLAARGQPY). The short motif at 125–132 (ARKASLQR) is the Nuclear localization signal element.

This sequence belongs to the TIFY/JAZ family. Ubiquitinated. Targeted for degradation by the SCF(COI1) E3 ubiquitin ligase-proteasome pathway during jasmonate signaling.

It is found in the nucleus. In terms of biological role, repressor of jasmonate responses. The sequence is that of Protein TIFY 11e from Oryza sativa subsp. japonica (Rice).